Reading from the N-terminus, the 151-residue chain is Large ribosomal subunit protein uL13 (151 aa).

It belongs to the universal ribosomal protein uL13 family. As to quaternary structure, part of the 50S ribosomal subunit.

In terms of biological role, this protein is one of the early assembly proteins of the 50S ribosomal subunit, although it is not seen to bind rRNA by itself. It is important during the early stages of 50S assembly. The chain is Large ribosomal subunit protein uL13 from Mycoplasma mycoides subsp. mycoides SC (strain CCUG 32753 / NCTC 10114 / PG1).